Here is a 146-residue protein sequence, read N- to C-terminus: MKLHELKPAAGSKKAPKRIGRGTGSGLGRNAGKGEKGQNARSGGGVRPGFEGGQMPLYRRLPKRGFTNIFAKKIVSINLDRLNIFENGTEVTPELLLERRVVSKVLDGVKILGNGTLEKSLTVKGCKFSKSAIEKIEAAGGKVEVM.

The tract at residues Met1 to Gln54 is disordered. Composition is skewed to gly residues over residues Arg21–Ala31 and Ser42–Gly52.

This sequence belongs to the universal ribosomal protein uL15 family. In terms of assembly, part of the 50S ribosomal subunit.

Functionally, binds to the 23S rRNA. This chain is Large ribosomal subunit protein uL15, found in Clostridium beijerinckii (strain ATCC 51743 / NCIMB 8052) (Clostridium acetobutylicum).